The sequence spans 335 residues: Selenide, water dikinase (335 aa).

Residue Sec7 is part of the active site. A non-standard amino acid (selenocysteine) is located at residue Sec7. Residues Lys10 and Leu36–Asp38 contribute to the ATP site. Asp39 provides a ligand contact to Mg(2+). Residues Asp55, Asp78, and Gly126–Thr128 each bind ATP. Residue Asp78 coordinates Mg(2+). Asp232 is a Mg(2+) binding site.

The protein belongs to the selenophosphate synthase 1 family. Class I subfamily. As to quaternary structure, homodimer. It depends on Mg(2+) as a cofactor.

The catalysed reaction is hydrogenselenide + ATP + H2O = selenophosphate + AMP + phosphate + 2 H(+). Functionally, synthesizes selenophosphate from selenide and ATP. This Methanococcus maripaludis (strain DSM 14266 / JCM 13030 / NBRC 101832 / S2 / LL) protein is Selenide, water dikinase.